The sequence spans 1066 residues: MIKEPEFRDYTPGKLEEKIEQFWKESNIYQKVKELRKNGPKYYFLDGPPYVSGAIHLGTAWNKIIKDMIIRFRTMQGYNVWRQPGYDMHGLPIEVKVEQALGLKTKKEIEEKIGVENFIQKCKEFALNNLRIMTEQFKMLGVWMDWDNPYMTIKNEYIESAWFTLKRAWEKGLLEKDKRVLHWCPRCETALAEHEVRGEYKLRKDPSIYVKFPVEGKENEYLLIWTTTPWTLPANLAVSAHPDYDYVKVRVDLNGREEYWILAKALVEKVLGDIGVKGEVVEEFKGKELEGLRYVHILMDEYPRQKEFREKYEWVHRVILADFVTLEEGTGLVHTAPGHGEEDFEVGQKYGLPVYSPVDDQGKYVEGKWKGVYVKEADPQIIEHLKEKGYLVKAGEIEHKYPHCWRCKTPLIFRATDQWFLKVSKVKEKIIKENDEKVTWYPEWVKIRFDNGVRDSGDWVISRQRYWGIPLPIWQSEDGEIYVVGSWKELVELAVAIEVNGERIDLPESYEEKLKVIEEKLGPEDLHRPYVDAFIIKVNGKEMRRVKDVVDVWFDSGIASWASLGYPRNKELFEKLWPADFIVEGEDQVTKWFYSQQAASVIAFDTVPYRAVAMHGYVLDEKGDKMSKSLGNIIRPEEVVEKAGRDTFRFYMLWATNPWENLKFSWKGVEQVRRMLNILWNVYVLSATYMSLDNFDPRNVKVEELEFREEDKWILSRVNNLIKEVENGIETFYLTKATRALYNFVVEDLSRWYVRLIRKRLWVEGDDPDKLAAYYTLWKVFDVLLRLMAPFTPYITEEIYQNIMRPFTGIESVHMLDWPKPDESAVDEELEREMEFIRRIVEAGSAARQKAKIKLRYPVRKIIIETQDDTVKKAVERLNYILRDQLNAKEVVVGNVEREITVKPNFAKVGPEFKGDARLVAKWISEHGLELYEKGEVDVEIEGKKFHLTREHIIVEENIPDFLVAEDFEGGRVYVDKTLTRELLAEGLAREFVRRIQEMRKRLDLDVNDRIVVTIETTEENRELLQENLEYIMRETRAIEVRFEEAKGYVVEWPEVQAKIGIEKIE.

Positions 49–59 (PYVSGAIHLGT) match the 'HIGH' region motif. Residues 625 to 629 (KMSKS) carry the 'KMSKS' region motif. ATP is bound at residue K628.

The protein belongs to the class-I aminoacyl-tRNA synthetase family. IleS type 2 subfamily. In terms of assembly, monomer. The cofactor is Zn(2+).

It is found in the cytoplasm. It carries out the reaction tRNA(Ile) + L-isoleucine + ATP = L-isoleucyl-tRNA(Ile) + AMP + diphosphate. Functionally, catalyzes the attachment of isoleucine to tRNA(Ile). As IleRS can inadvertently accommodate and process structurally similar amino acids such as valine, to avoid such errors it has two additional distinct tRNA(Ile)-dependent editing activities. One activity is designated as 'pretransfer' editing and involves the hydrolysis of activated Val-AMP. The other activity is designated 'posttransfer' editing and involves deacylation of mischarged Val-tRNA(Ile). This Pyrococcus furiosus (strain ATCC 43587 / DSM 3638 / JCM 8422 / Vc1) protein is Isoleucine--tRNA ligase.